We begin with the raw amino-acid sequence, 339 residues long: Malate dehydrogenase 3, cytoplasmic (339 aa).

Residues 22 to 23 (NI), D49, and G96 each bind NAD(+). An oxaloacetate-binding site is contributed by R105. Residues Q119 and N138 each coordinate NAD(+). Residues N138, R169, H194, and S249 each coordinate oxaloacetate. Residue H194 is the Proton acceptor of the active site.

It belongs to the LDH/MDH superfamily. MDH type 2 family. In terms of tissue distribution, expressed in rosette leaves at low levels.

The protein resides in the cytoplasm. The enzyme catalyses (S)-malate + NAD(+) = oxaloacetate + NADH + H(+). Functionally, catalyzes a reversible NAD-dependent dehydrogenase reaction involved in central metabolism and redox homeostasis between organelle compartments. The polypeptide is Malate dehydrogenase 3, cytoplasmic (Arabidopsis thaliana (Mouse-ear cress)).